Here is a 228-residue protein sequence, read N- to C-terminus: uncharacterized protein (228 aa).

The disordered stretch occupies residues 1 to 34 (MPRDTKPYSRPANAPRPGVKTERSNQFKAASTKY).

This is an uncharacterized protein from Orgyia pseudotsugata (Douglas-fir tussock moth).